The sequence spans 273 residues: 4-hydroxy-tetrahydrodipicolinate reductase (273 aa).

11–16 (GAGGRM) serves as a coordination point for NAD(+). R37 is an NADP(+) binding site. Residues 100-102 (GTT) and 124-127 (AANY) contribute to the NAD(+) site. H157 (proton donor/acceptor) is an active-site residue. Residue H158 participates in (S)-2,3,4,5-tetrahydrodipicolinate binding. The active-site Proton donor is the K161. 167-168 (GT) provides a ligand contact to (S)-2,3,4,5-tetrahydrodipicolinate.

This sequence belongs to the DapB family.

It localises to the cytoplasm. The enzyme catalyses (S)-2,3,4,5-tetrahydrodipicolinate + NAD(+) + H2O = (2S,4S)-4-hydroxy-2,3,4,5-tetrahydrodipicolinate + NADH + H(+). It catalyses the reaction (S)-2,3,4,5-tetrahydrodipicolinate + NADP(+) + H2O = (2S,4S)-4-hydroxy-2,3,4,5-tetrahydrodipicolinate + NADPH + H(+). The protein operates within amino-acid biosynthesis; L-lysine biosynthesis via DAP pathway; (S)-tetrahydrodipicolinate from L-aspartate: step 4/4. Catalyzes the conversion of 4-hydroxy-tetrahydrodipicolinate (HTPA) to tetrahydrodipicolinate. The polypeptide is 4-hydroxy-tetrahydrodipicolinate reductase (Acinetobacter baumannii (strain AB307-0294)).